Consider the following 360-residue polypeptide: Photosystem II protein D1 (360 aa).

Transmembrane regions (helical) follow at residues 29–46 (YIGW…SAIS), 118–133 (HFFI…EWEL), and 142–156 (WICV…AAAA). Histidine 118 contacts chlorophyll a. Residue tyrosine 126 coordinates pheophytin a. Positions 170 and 189 each coordinate [CaMn4O5] cluster. A helical transmembrane segment spans residues 197–218 (FHMLGVAGVFGGSLFSAMHGSL). Histidine 198 lines the chlorophyll a pocket. Residues histidine 215 and 264–265 (SF) each bind a quinone. Histidine 215 provides a ligand contact to Fe cation. Residue histidine 272 participates in Fe cation binding. The chain crosses the membrane as a helical span at residues 274–288 (FLGAWPVVGIWFTAM). [CaMn4O5] cluster is bound by residues histidine 332, glutamate 333, aspartate 342, and alanine 344. Residues 345–360 (AGESLPVALVAPAVAA) constitute a propeptide that is removed on maturation.

Belongs to the reaction center PufL/M/PsbA/D family. In terms of assembly, PSII is composed of 1 copy each of membrane proteins PsbA, PsbB, PsbC, PsbD, PsbE, PsbF, PsbH, PsbI, PsbJ, PsbK, PsbL, PsbM, PsbT, PsbX, PsbY, PsbZ, Psb30/Ycf12, at least 3 peripheral proteins of the oxygen-evolving complex and a large number of cofactors. It forms dimeric complexes. Requires The D1/D2 heterodimer binds P680, chlorophylls that are the primary electron donor of PSII, and subsequent electron acceptors. It shares a non-heme iron and each subunit binds pheophytin, quinone, additional chlorophylls, carotenoids and lipids. D1 provides most of the ligands for the Mn4-Ca-O5 cluster of the oxygen-evolving complex (OEC). There is also a Cl(-1) ion associated with D1 and D2, which is required for oxygen evolution. The PSII complex binds additional chlorophylls, carotenoids and specific lipids. as cofactor. Post-translationally, tyr-161 forms a radical intermediate that is referred to as redox-active TyrZ, YZ or Y-Z. In terms of processing, C-terminally processed by CTPA; processing is essential to allow assembly of the oxygen-evolving complex and thus photosynthetic growth.

The protein resides in the plastid. It is found in the chloroplast thylakoid membrane. The enzyme catalyses 2 a plastoquinone + 4 hnu + 2 H2O = 2 a plastoquinol + O2. Its function is as follows. Photosystem II (PSII) is a light-driven water:plastoquinone oxidoreductase that uses light energy to abstract electrons from H(2)O, generating O(2) and a proton gradient subsequently used for ATP formation. It consists of a core antenna complex that captures photons, and an electron transfer chain that converts photonic excitation into a charge separation. The D1/D2 (PsbA/PsbD) reaction center heterodimer binds P680, the primary electron donor of PSII as well as several subsequent electron acceptors. The polypeptide is Photosystem II protein D1 (Emiliania huxleyi (Coccolithophore)).